Consider the following 212-residue polypeptide: Holliday junction branch migration complex subunit RuvA (212 aa).

The domain I stretch occupies residues 1–70; sequence MISYLKGSPI…EDQQILYGFS (70 aa). The segment at 71 to 149 is domain II; that stretch reads TTAERELFRQ…QWRKMVGVTV (79 aa). Residues 150–160 form a flexible linker region; the sequence is TSSAAMPSLEI. The domain III stretch occupies residues 160–212; it reads ILEDIEMTLLALGYTNEEINKAISTLSQDNLMLKNTNTEEWIKEAIAWLSQGT.

Belongs to the RuvA family. As to quaternary structure, homotetramer. Forms an RuvA(8)-RuvB(12)-Holliday junction (HJ) complex. HJ DNA is sandwiched between 2 RuvA tetramers; dsDNA enters through RuvA and exits via RuvB. An RuvB hexamer assembles on each DNA strand where it exits the tetramer. Each RuvB hexamer is contacted by two RuvA subunits (via domain III) on 2 adjacent RuvB subunits; this complex drives branch migration. In the full resolvosome a probable DNA-RuvA(4)-RuvB(12)-RuvC(2) complex forms which resolves the HJ.

Its subcellular location is the cytoplasm. Its function is as follows. The RuvA-RuvB-RuvC complex processes Holliday junction (HJ) DNA during genetic recombination and DNA repair, while the RuvA-RuvB complex plays an important role in the rescue of blocked DNA replication forks via replication fork reversal (RFR). RuvA specifically binds to HJ cruciform DNA, conferring on it an open structure. The RuvB hexamer acts as an ATP-dependent pump, pulling dsDNA into and through the RuvAB complex. HJ branch migration allows RuvC to scan DNA until it finds its consensus sequence, where it cleaves and resolves the cruciform DNA. This is Holliday junction branch migration complex subunit RuvA from Crocosphaera subtropica (strain ATCC 51142 / BH68) (Cyanothece sp. (strain ATCC 51142)).